The primary structure comprises 24 residues: Citropin-3.1.2 (24 aa).

Expressed by the dorsal and submental skin glands.

Its subcellular location is the secreted. The sequence is that of Citropin-3.1.2 from Ranoidea citropa (Australian Blue Mountains tree frog).